Reading from the N-terminus, the 320-residue chain is MASILPASNRSMRPDKNTYERKRSVYVKNPYLEGMDEDILYHLDLGTKTHNLPAMFGDVKFVCVGGSPNRMKAFAQFMHKELRLEGDGEDIEDICAGTDRYCMFKTGPVLSVSHGMGIPSISIMLHELIKLLHHAHCCDVTIIRIGTSGGIGIAPGSVVITDTAVDSFFKPRFEQVILDNVVTRSTELDKELANDLFNCSREIPNVPTLIGHTMCTYDFYEGQGRLDGALCSFSREKKLDYLKRAYRAGVRNIEMESTVFAAMCGLCGLRAAVVCVTLLDRLESDQINLSHDVLVEYQQRPQLLISNFIKKQLGLCDQMS.

Residues Gly66, Arg100, and 144-147 each bind phosphate; that span reads RIGT. A disulfide bridge connects residues Cys95 and Cys102. Uridine is bound by residues 148–149 and 223–225; these read SG and QGR.

Belongs to the PNP/UDP phosphorylase family. In terms of assembly, homodimer. Liver specific.

The enzyme catalyses uridine + phosphate = alpha-D-ribose 1-phosphate + uracil. It carries out the reaction 2'-deoxyuridine + phosphate = 2-deoxy-alpha-D-ribose 1-phosphate + uracil. It functions in the pathway pyrimidine metabolism; UMP biosynthesis via salvage pathway; uracil from uridine (phosphorylase route): step 1/1. A conditional disulfide bridge can form within the protein that dislocates a critical phosphate-coordinating arginine Arg-100 away from the active site, disabling the enzyme. Its function is as follows. Catalyzes the reversible phosphorylytic cleavage of uridine to uracil and ribose-1-phosphate which can then be utilized as carbon and energy sources or in the rescue of pyrimidine bases for nucleotide synthesis. Shows broad substrate specificity and can also accept deoxyuridine and other analogous compounds. This chain is Uridine phosphorylase 2, found in Mus musculus (Mouse).